A 534-amino-acid chain; its full sequence is Probable bifunctional tRNA threonylcarbamoyladenosine biosynthesis protein (534 aa).

Positions 1–325 (MLCLGIEGTA…YRTDEVDVPW (325 aa)) are kae1. The Fe cation site is built by His108, His112, and Tyr129. Residues 129–133 (YVSGG), Asp161, Gly174, Glu178, and Asn258 each bind L-threonylcarbamoyladenylate. Asp286 lines the Fe cation pocket. In terms of domain architecture, Protein kinase spans 335–534 (LPPDILAKGA…EIESRGRYTD (200 aa)). ATP-binding positions include 340-348 (LAKGAEANI) and Lys361. Asp451 functions as the Proton acceptor; for kinase activity in the catalytic mechanism.

It in the N-terminal section; belongs to the KAE1 / TsaD family. In the C-terminal section; belongs to the protein kinase superfamily. Tyr protein kinase family. BUD32 subfamily. As to quaternary structure, component of the KEOPS complex that consists of Kae1, Bud32, Cgi121 and Pcc1; the whole complex dimerizes. Fe(2+) is required as a cofactor.

The protein localises to the cytoplasm. The catalysed reaction is L-seryl-[protein] + ATP = O-phospho-L-seryl-[protein] + ADP + H(+). The enzyme catalyses L-threonyl-[protein] + ATP = O-phospho-L-threonyl-[protein] + ADP + H(+). It carries out the reaction L-threonylcarbamoyladenylate + adenosine(37) in tRNA = N(6)-L-threonylcarbamoyladenosine(37) in tRNA + AMP + H(+). Functionally, required for the formation of a threonylcarbamoyl group on adenosine at position 37 (t(6)A37) in tRNAs that read codons beginning with adenine. Is a component of the KEOPS complex that is probably involved in the transfer of the threonylcarbamoyl moiety of threonylcarbamoyl-AMP (TC-AMP) to the N6 group of A37. The Kae1 domain likely plays a direct catalytic role in this reaction. The Bud32 domain probably displays kinase activity that regulates Kae1 function. The chain is Probable bifunctional tRNA threonylcarbamoyladenosine biosynthesis protein from Methanothermobacter thermautotrophicus (strain ATCC 29096 / DSM 1053 / JCM 10044 / NBRC 100330 / Delta H) (Methanobacterium thermoautotrophicum).